Here is an 810-residue protein sequence, read N- to C-terminus: Plasminogen (810 aa).

The N-terminal stretch at 1 to 19 is a signal peptide; the sequence is MQRKELVLLFLLFLQPGHG. Residues 20 to 98 form the PAN domain; it reads IPLDDYVTTQ…RDVILFEKKM (79 aa). Cystine bridges form between cysteine 49-cysteine 73, cysteine 53-cysteine 61, cysteine 103-cysteine 181, cysteine 124-cysteine 164, cysteine 152-cysteine 176, cysteine 185-cysteine 262, cysteine 188-cysteine 316, cysteine 206-cysteine 245, cysteine 234-cysteine 257, cysteine 275-cysteine 352, cysteine 296-cysteine 335, cysteine 324-cysteine 347, cysteine 379-cysteine 456, cysteine 400-cysteine 439, cysteine 428-cysteine 451, cysteine 482-cysteine 561, cysteine 503-cysteine 544, cysteine 532-cysteine 556, cysteine 569-cysteine 685, cysteine 579-cysteine 586, cysteine 607-cysteine 623, cysteine 699-cysteine 766, cysteine 729-cysteine 745, and cysteine 756-cysteine 784. Kringle domains are found at residues 103 to 181, 185 to 262, 275 to 352, 379 to 456, and 482 to 561; these read CKVG…IIQC, CMHC…IPRC, CLMG…IPDC, CYQG…LKKC, and CIID…IPHC. Asparagine 339 carries an N-linked (GlcNAc...) asparagine glycan. Positions 398–418 are disordered; sequence KKCQPWTSMRPHRHSKTPENY. Positions 582–808 constitute a Peptidase S1 domain; it reads RVGGCVAHPH…YVSWLQDVMR (227 aa). Serine 598 is subject to Phosphoserine. Residues histidine 622 and aspartate 665 each act as charge relay system in the active site. Serine 760 acts as the Charge relay system in catalysis.

Belongs to the peptidase S1 family. Plasminogen subfamily. Interacts with CSPG4 and AMOT. Interacts (via the Kringle domains) with HRG; the interaction tethers PLG to the cell surface and enhances its activation. Interacts (via Kringle 4 domain) with ADA; the interaction stimulates PLG activation when in complex with DPP4. Angiostatin: Interacts with ATP5F1A; the interaction inhibits most of the angiogenic effects of angiostatin. In the presence of the inhibitor, the activation involves only cleavage after Arg-582, yielding two chains held together by two disulfide bonds. In the absence of the inhibitor, the activation involves additionally the removal of the activation peptide.

The protein resides in the secreted. The catalysed reaction is Preferential cleavage: Lys-|-Xaa &gt; Arg-|-Xaa, higher selectivity than trypsin. Converts fibrin into soluble products.. Converted into plasmin by plasminogen activators, both plasminogen and its activator being bound to fibrin. Cannot be activated with streptokinase. Functionally, plasmin dissolves the fibrin of blood clots and acts as a proteolytic factor in a variety of other processes including embryonic development, tissue remodeling, tumor invasion, and inflammation. In ovulation, weakens the walls of the Graafian follicle. It activates the urokinase-type plasminogen activator, collagenases and several complement zymogens, such as C1, C4 and C5. Cleavage of fibronectin and laminin leads to cell detachment and apoptosis. Also cleaves fibrin, thrombospondin and von Willebrand factor. Its role in tissue remodeling and tumor invasion may be modulated by CSPG4. Binds to cells. The polypeptide is Plasminogen (PLG) (Erinaceus europaeus (Western European hedgehog)).